A 154-amino-acid polypeptide reads, in one-letter code: Large ribosomal subunit protein uL30 (154 aa).

Belongs to the universal ribosomal protein uL30 family. Part of the 50S ribosomal subunit.

The polypeptide is Large ribosomal subunit protein uL30 (Methanocaldococcus jannaschii (strain ATCC 43067 / DSM 2661 / JAL-1 / JCM 10045 / NBRC 100440) (Methanococcus jannaschii)).